The sequence spans 174 residues: 2-hydroxy-palmitic acid dioxygenase MPO1 (174 aa).

The Cytoplasmic portion of the chain corresponds to 1–23; it reads MGEGLLDLRSQLGFYKFYHHNPK. Residues 24-44 form a helical membrane-spanning segment; that stretch reads NVLIHSIFVPTILFSGSCMLH. The Lumenal portion of the chain corresponds to 45–63; the sequence is RVKIYQSISLTAVLSVLFS. Residues 64–84 form a helical membrane-spanning segment; the sequence is IFYCLLYLPTGLLAGVLLLLL. The Cytoplasmic portion of the chain corresponds to 85 to 98; sequence NLALIDHRVDLTFK. Residues 99 to 119 form a helical membrane-spanning segment; it reads QELGLFTIGWIFQFVGHGVFE. At 120-131 the chain is on the lumenal side; the sequence is KRRPALIDNLVQ. Residues 132-152 form a helical membrane-spanning segment; sequence SLVLAPYFIMFEFLFKLGFMP. The Cytoplasmic segment spans residues 153-174; the sequence is RLKATLEHDLEIKQRNLRMQRQ.

This sequence belongs to the MPO1 family. Fe(2+) serves as cofactor.

It is found in the endoplasmic reticulum membrane. The enzyme catalyses (R)-2-hydroxyhexadecanoate + O2 = pentadecanoate + CO2 + H2O. Its function is as follows. Dioxygenase that catalyzes the alpha-oxidation of 2-hydroxy fatty acids in an iron-dependent manner. Involved in metabolism of phytosphingosine and is required for proper endoplasmic reticulum stress response. This chain is 2-hydroxy-palmitic acid dioxygenase MPO1, found in Saccharomyces cerevisiae (strain ATCC 204508 / S288c) (Baker's yeast).